A 1481-amino-acid polypeptide reads, in one-letter code: Protein shortage in chiasmata 1 ortholog (1481 aa).

2 disordered regions span residues 479-498 (TDVH…EKEV) and 512-560 (KSKV…IQAS). Residues 513 to 531 (SKVEANPKNDQEPEARIMQ) are compositionally biased toward basic and acidic residues. Residues 543–560 (SSQVPSAESASSSQIQAS) show a composition bias toward low complexity.

The protein belongs to the XPF family. Highly divergent. Interacts with TEX11. Interacts with SPO16. As to expression, mainly expressed in adult testis.

Its subcellular location is the chromosome. Its function is as follows. ATPase required during meiosis for the formation of crossover recombination intermediates. Binds DNA: preferentially binds to single-stranded DNA and DNA branched structures. Does not show nuclease activity in vitro, but shows ATPase activity, which is stimulated by the presence of single-stranded DNA. Plays a key role in homologous recombination and crossing-over in meiotic prophase I in male and female germ cells. Required for proper synaptonemal complex assembly and homologous chromosome pairing. Required for recruitment of TEX11 and MSH4 to recombination intermediates. The sequence is that of Protein shortage in chiasmata 1 ortholog from Mus musculus (Mouse).